A 968-amino-acid chain; its full sequence is RNA polymerase-associated protein RapA (968 aa).

Residues Asp-164–Asn-334 enclose the Helicase ATP-binding domain. Asp-177 to Thr-184 is a binding site for ATP. A DEAH box motif is present at residues Asp-280–His-283. Positions Arg-490–Gly-662 constitute a Helicase C-terminal domain.

Belongs to the SNF2/RAD54 helicase family. RapA subfamily. As to quaternary structure, interacts with the RNAP. Has a higher affinity for the core RNAP than for the holoenzyme. Its ATPase activity is stimulated by binding to RNAP.

Functionally, transcription regulator that activates transcription by stimulating RNA polymerase (RNAP) recycling in case of stress conditions such as supercoiled DNA or high salt concentrations. Probably acts by releasing the RNAP, when it is trapped or immobilized on tightly supercoiled DNA. Does not activate transcription on linear DNA. Probably not involved in DNA repair. The polypeptide is RNA polymerase-associated protein RapA (Escherichia fergusonii (strain ATCC 35469 / DSM 13698 / CCUG 18766 / IAM 14443 / JCM 21226 / LMG 7866 / NBRC 102419 / NCTC 12128 / CDC 0568-73)).